The primary structure comprises 556 residues: Formate--tetrahydrofolate ligase (556 aa).

ATP is bound at residue Thr-64 to Thr-71.

Belongs to the formate--tetrahydrofolate ligase family.

It carries out the reaction (6S)-5,6,7,8-tetrahydrofolate + formate + ATP = (6R)-10-formyltetrahydrofolate + ADP + phosphate. It functions in the pathway one-carbon metabolism; tetrahydrofolate interconversion. The sequence is that of Formate--tetrahydrofolate ligase from Haemophilus ducreyi (strain 35000HP / ATCC 700724).